A 141-amino-acid chain; its full sequence is ATP synthase epsilon chain (141 aa).

Belongs to the ATPase epsilon chain family. In terms of assembly, F-type ATPases have 2 components, CF(1) - the catalytic core - and CF(0) - the membrane proton channel. CF(1) has five subunits: alpha(3), beta(3), gamma(1), delta(1), epsilon(1). CF(0) has three main subunits: a, b and c.

The protein resides in the cell inner membrane. Its function is as follows. Produces ATP from ADP in the presence of a proton gradient across the membrane. The polypeptide is ATP synthase epsilon chain (Hahella chejuensis (strain KCTC 2396)).